The chain runs to 141 residues: Large ribosomal subunit protein uL11 (141 aa).

It belongs to the universal ribosomal protein uL11 family. Part of the ribosomal stalk of the 50S ribosomal subunit. Interacts with L10 and the large rRNA to form the base of the stalk. L10 forms an elongated spine to which L12 dimers bind in a sequential fashion forming a multimeric L10(L12)X complex. One or more lysine residues are methylated.

In terms of biological role, forms part of the ribosomal stalk which helps the ribosome interact with GTP-bound translation factors. This Chloroherpeton thalassium (strain ATCC 35110 / GB-78) protein is Large ribosomal subunit protein uL11.